The following is a 217-amino-acid chain: dITP/XTP pyrophosphatase (217 aa).

Residue 7–12 coordinates substrate; it reads SRNKKK. Catalysis depends on Asp72, which acts as the Proton acceptor. Asp72 serves as a coordination point for Mg(2+). Residues Ser73, 163–166, Lys195, and 200–201 contribute to the substrate site; these read FGYD and HR.

This sequence belongs to the HAM1 NTPase family. Homodimer. Mg(2+) serves as cofactor.

It carries out the reaction XTP + H2O = XMP + diphosphate + H(+). It catalyses the reaction dITP + H2O = dIMP + diphosphate + H(+). The enzyme catalyses ITP + H2O = IMP + diphosphate + H(+). In terms of biological role, pyrophosphatase that catalyzes the hydrolysis of nucleoside triphosphates to their monophosphate derivatives, with a high preference for the non-canonical purine nucleotides XTP (xanthosine triphosphate), dITP (deoxyinosine triphosphate) and ITP. Seems to function as a house-cleaning enzyme that removes non-canonical purine nucleotides from the nucleotide pool, thus preventing their incorporation into DNA/RNA and avoiding chromosomal lesions. This Corynebacterium jeikeium (strain K411) protein is dITP/XTP pyrophosphatase.